Reading from the N-terminus, the 241-residue chain is Biosynthetic peptidoglycan transglycosylase (241 aa).

The chain crosses the membrane as a helical span at residues 18-38; sequence GVIGIIALWMAGILIFAFLPV.

It belongs to the glycosyltransferase 51 family.

It is found in the cell inner membrane. The catalysed reaction is [GlcNAc-(1-&gt;4)-Mur2Ac(oyl-L-Ala-gamma-D-Glu-L-Lys-D-Ala-D-Ala)](n)-di-trans,octa-cis-undecaprenyl diphosphate + beta-D-GlcNAc-(1-&gt;4)-Mur2Ac(oyl-L-Ala-gamma-D-Glu-L-Lys-D-Ala-D-Ala)-di-trans,octa-cis-undecaprenyl diphosphate = [GlcNAc-(1-&gt;4)-Mur2Ac(oyl-L-Ala-gamma-D-Glu-L-Lys-D-Ala-D-Ala)](n+1)-di-trans,octa-cis-undecaprenyl diphosphate + di-trans,octa-cis-undecaprenyl diphosphate + H(+). It participates in cell wall biogenesis; peptidoglycan biosynthesis. Its function is as follows. Peptidoglycan polymerase that catalyzes glycan chain elongation from lipid-linked precursors. In Yersinia pseudotuberculosis serotype O:1b (strain IP 31758), this protein is Biosynthetic peptidoglycan transglycosylase.